A 73-amino-acid polypeptide reads, in one-letter code: Mu-scoloptoxin(15)-Ssd1a (73 aa).

Residues 1–20 (MKFHIIFCLLAALMMTSAFA) form the signal peptide.

Contains 2 disulfide bonds. As to expression, expressed by the venom gland.

It localises to the secreted. In terms of biological role, voltage-gated sodium channel inhibitor. The sequence is that of Mu-scoloptoxin(15)-Ssd1a from Scolopendra dehaani (Thai centipede).